Consider the following 155-residue polypeptide: MLKQVEIFTDGSCLGNPGPGGYGAIMRYRQHEKTFSAGYRLTTNNRMELMAAIVALEALKEHCEVVLSTDSQYVRQGITQWIHNWKKRGWKTAEKKPVKNVDLWQRLDAALGQHKIKWEWVKGHAGHPENERCDELARAAASHPTQDDIGYQPES.

Residues 1-142 (MLKQVEIFTD…CDELARAAAS (142 aa)) enclose the RNase H type-1 domain. Mg(2+)-binding residues include aspartate 10, glutamate 48, aspartate 70, and aspartate 134.

The protein belongs to the RNase H family. As to quaternary structure, monomer. It depends on Mg(2+) as a cofactor.

It localises to the cytoplasm. It carries out the reaction Endonucleolytic cleavage to 5'-phosphomonoester.. Endonuclease that specifically degrades the RNA of RNA-DNA hybrids. The polypeptide is Ribonuclease H (Klebsiella pneumoniae (strain 342)).